The primary structure comprises 242 residues: Pyridoxine 5'-phosphate synthase (242 aa).

N7 provides a ligand contact to 3-amino-2-oxopropyl phosphate. Residue 9-10 coordinates 1-deoxy-D-xylulose 5-phosphate; that stretch reads DH. R18 contributes to the 3-amino-2-oxopropyl phosphate binding site. H43 acts as the Proton acceptor in catalysis. 1-deoxy-D-xylulose 5-phosphate contacts are provided by R45 and H50. The Proton acceptor role is filled by E70. T100 provides a ligand contact to 1-deoxy-D-xylulose 5-phosphate. Catalysis depends on H190, which acts as the Proton donor. Residues G191 and 212-213 each bind 3-amino-2-oxopropyl phosphate; that span reads GH.

This sequence belongs to the PNP synthase family. In terms of assembly, homooctamer; tetramer of dimers.

It localises to the cytoplasm. It carries out the reaction 3-amino-2-oxopropyl phosphate + 1-deoxy-D-xylulose 5-phosphate = pyridoxine 5'-phosphate + phosphate + 2 H2O + H(+). The protein operates within cofactor biosynthesis; pyridoxine 5'-phosphate biosynthesis; pyridoxine 5'-phosphate from D-erythrose 4-phosphate: step 5/5. Functionally, catalyzes the complicated ring closure reaction between the two acyclic compounds 1-deoxy-D-xylulose-5-phosphate (DXP) and 3-amino-2-oxopropyl phosphate (1-amino-acetone-3-phosphate or AAP) to form pyridoxine 5'-phosphate (PNP) and inorganic phosphate. In Thermodesulfovibrio yellowstonii (strain ATCC 51303 / DSM 11347 / YP87), this protein is Pyridoxine 5'-phosphate synthase.